The following is a 185-amino-acid chain: Ribosome-recycling factor (185 aa).

The protein belongs to the RRF family.

It is found in the cytoplasm. Functionally, responsible for the release of ribosomes from messenger RNA at the termination of protein biosynthesis. May increase the efficiency of translation by recycling ribosomes from one round of translation to another. The polypeptide is Ribosome-recycling factor (Idiomarina loihiensis (strain ATCC BAA-735 / DSM 15497 / L2-TR)).